The following is a 164-amino-acid chain: Leucine-rich single-pass membrane protein 2 (164 aa).

Residues G97–V117 form a helical membrane-spanning segment.

It localises to the membrane. The protein is Leucine-rich single-pass membrane protein 2 (LSMEM2) of Homo sapiens (Human).